The primary structure comprises 308 residues: Ribosomal RNA small subunit methyltransferase H (308 aa).

S-adenosyl-L-methionine is bound by residues 31 to 33, D51, F75, D97, and Q104; that span reads GGH.

It belongs to the methyltransferase superfamily. RsmH family.

The protein resides in the cytoplasm. It catalyses the reaction cytidine(1402) in 16S rRNA + S-adenosyl-L-methionine = N(4)-methylcytidine(1402) in 16S rRNA + S-adenosyl-L-homocysteine + H(+). Specifically methylates the N4 position of cytidine in position 1402 (C1402) of 16S rRNA. The protein is Ribosomal RNA small subunit methyltransferase H of Tolumonas auensis (strain DSM 9187 / NBRC 110442 / TA 4).